The sequence spans 584 residues: Methionine--tRNA ligase (584 aa).

A 'HIGH' region motif is present at residues 12–22 (PYANGDLHLGH). Residues Cys-144, Cys-147, Cys-157, and Cys-160 each coordinate Zn(2+). The 'KMSKS' region signature appears at 334 to 338 (QFSTS). An ATP-binding site is contributed by Thr-337. Residues 541–563 (EGRDRWAPSELEAGRPLPPPQPL) form a disordered region.

Belongs to the class-I aminoacyl-tRNA synthetase family. MetG type 1 subfamily. Monomer. Zn(2+) is required as a cofactor.

It is found in the cytoplasm. It carries out the reaction tRNA(Met) + L-methionine + ATP = L-methionyl-tRNA(Met) + AMP + diphosphate. Its function is as follows. Is required not only for elongation of protein synthesis but also for the initiation of all mRNA translation through initiator tRNA(fMet) aminoacylation. This Thermomicrobium roseum (strain ATCC 27502 / DSM 5159 / P-2) protein is Methionine--tRNA ligase.